We begin with the raw amino-acid sequence, 1297 residues long: Probable bifunctional E2/E3 enzyme R795 (1297 aa).

The RING-type; atypical zinc finger occupies 74-128 (CAICRYQENEPCIEHKSSESNTKCPIAQSVSCSHSFHACCISRWLHTKKTCPLCN). The U-box domain occupies 678 to 750 (EPLQEFLCPI…RDWKENNTVI (73 aa)). The region spanning 899–1082 (EMTLEIHSSN…LDIMELETMI (184 aa)) is the VWFA domain. In terms of domain architecture, UBC core spans 1133–1279 (QKLIRVQREI…IIDYVNKFAL (147 aa)). The active-site Glycyl thioester intermediate is the Cys1217.

It in the C-terminal section; belongs to the ubiquitin-conjugating enzyme family.

The catalysed reaction is S-ubiquitinyl-[E2 ubiquitin-conjugating enzyme]-L-cysteine + [acceptor protein]-L-lysine = [E2 ubiquitin-conjugating enzyme]-L-cysteine + N(6)-ubiquitinyl-[acceptor protein]-L-lysine.. It catalyses the reaction S-ubiquitinyl-[E1 ubiquitin-activating enzyme]-L-cysteine + [E2 ubiquitin-conjugating enzyme]-L-cysteine = [E1 ubiquitin-activating enzyme]-L-cysteine + S-ubiquitinyl-[E2 ubiquitin-conjugating enzyme]-L-cysteine.. It participates in protein modification; protein ubiquitination. Catalyzes the covalent attachment of ubiquitin to other proteins. Also acts as an E3 ubiquitin-protein ligase. In Acanthamoeba polyphaga (Amoeba), this protein is Probable bifunctional E2/E3 enzyme R795.